The following is a 549-amino-acid chain: DDB1- and CUL4-associated factor 11 (549 aa).

Positions 1 to 24 (MGSRNSSSAGSGSLEPSEGLSRRG) are enriched in low complexity. The interval 1-40 (MGSRNSSSAGSGSLEPSEGLSRRGTGLRRSEEEEEEDEDV) is disordered. Residues Ser-73 and Ser-75 each carry the phosphoserine modification. WD repeat units lie at residues 170–210 (TYSQ…HKFK), 216–258 (DVGW…TALD), 263–302 (ERRFAVFSIAVSSDGREVLGGANDGCLYVFDREQNRRTLQ), 305–345 (SHED…EDDP), 353–392 (GHQDGITFIDSKGDARYLISNSKDQTIKLWDIRRFSSREG), 435–480 (GVLH…KKLT), and 481–520 (NHKACVRDVSWHPFEEKIVSSSWDGNLRLWQYRQAEYFQD).

As to quaternary structure, interacts with DDB1 and CUL4A.

It participates in protein modification; protein ubiquitination. Functionally, may function as a substrate receptor for CUL4-DDB1 E3 ubiquitin-protein ligase complex. The protein is DDB1- and CUL4-associated factor 11 (Dcaf11) of Mus musculus (Mouse).